We begin with the raw amino-acid sequence, 88 residues long: Large ribosomal subunit protein eL34 (88 aa).

The interval arginine 41–cysteine 72 is disordered.

Belongs to the eukaryotic ribosomal protein eL34 family.

This Thermococcus sibiricus (strain DSM 12597 / MM 739) protein is Large ribosomal subunit protein eL34.